The primary structure comprises 337 residues: Meiotic driver wtf4 (337 aa).

Basic and acidic residues predominate over residues 1-29 (MKNKDYPLRSSMDELSTKNDNEIDLEKGP). Positions 1 to 40 (MKNKDYPLRSSMDELSTKNDNEIDLEKGPLPEYNSEDEST) are disordered. Helical transmembrane passes span 89-109 (LLIS…CVNP), 119-139 (AFFV…FCFF), 149-169 (CIKV…VGLY), 176-196 (VVII…RSKF), 210-230 (CSIS…FWTL), and 234-254 (FSGL…TKGL).

It belongs to the WTF family. As to quaternary structure, homomer. Forms protein aggregates. The two isoforms can interact with each other and with themselves. High sequence similarity is required for their interaction.

The protein localises to the spore membrane. The protein resides in the vacuole membrane. Its subcellular location is the ascus epiplasm. It localises to the cytoplasm. It is found in the endoplasmic reticulum membrane. Functionally, promotes unequal transmission of alleles from the parental zygote to progeny spores by acting as poison/antidote system where the poison and antidote proteins are produced from the same locus; the poison component is trans-acting and targets all spores within an ascus whereas the antidote component is spore-specific, leading to poisoning of all progeny that do not inherit the allele. In terms of biological role, localizes isoform 2 to the vacuole thereby facilitating its degradation. Its function is as follows. Forms toxic aggregates that disrupt spore maturation. This is Meiotic driver wtf4 from Schizosaccharomyces kambucha (Fission yeast).